The chain runs to 392 residues: Ceramide phosphoethanolamine synthase (392 aa).

At 1-10 (MIGPSSQISK) the chain is on the lumenal side. The helical transmembrane segment at 11–31 (ILLTLLFLLIIFYVFMDVELY) threads the bilayer. Residues 32 to 140 (LRIHNYAIER…MFDNVIGFSR (109 aa)) are Cytoplasmic-facing. Residues 59–82 (SESGSGSIGGSSSSSSSSSSSTST) are compositionally biased toward low complexity. The tract at residues 59-91 (SESGSGSIGGSSSSSSSSSSSTSTKLPTAGDRQ) is disordered. The helical transmembrane segment at 141-161 (STFITPNMISFFHVGVACLAG) threads the bilayer. The Lumenal portion of the chain corresponds to 162 to 212 (KLVASDSLGYRRLGVLLFQIRTFLDDLDGHVARVRKHIRGERSEIGTSGYY). Residues 213–233 (VDGLCDGLGCIALLLGIFFYL) form a helical membrane-spanning segment. Residues 234–271 (KNNPPRRGYSIIPMSDSKLPEPTMMIPKMKATTRKVAK) are Cytoplasmic-facing. A helical transmembrane segment spans residues 272 to 288 (NVISFTGQLLLSSTAWN). The Lumenal segment spans residues 289 to 319 (RYIAVYQNMLEREDVSGNQSHCQDYVFKSTW). Residues 320–340 (FFCVAWMWRIVNVHALLHCVL) traverse the membrane as a helical segment. Over 341-356 (LSIFCDKLWDFLRAIR) the chain is Cytoplasmic. A helical membrane pass occupies residues 357 to 377 (YSGYIILLVAICLTEMHILEA). Residues 378 to 392 (QNYIFNSTACSNISL) lie on the Lumenal side of the membrane.

Belongs to the CDP-alcohol phosphatidyltransferase class-I family. Mn(2+) is required as a cofactor.

The protein localises to the membrane. It is found in the golgi apparatus membrane. Its subcellular location is the cell membrane. It carries out the reaction CDP-ethanolamine + an N-acylsphing-4-enine = an N-acylsphing-4-enine 1-phosphoethanolamine + CMP + H(+). The catalysed reaction is CDP-ethanolamine + an N-acyl-sphingoid base = an N-acyl-sphingoid 1-phosphoethanolamine + CMP + H(+). Catalyzes the biosynthesis of ceramide phosphoethanolamine (CPE) through the transfer of a phosphatidyl head group from cytidine 5'-diphosphate (CDP)-ethanolamine on to the primary hydroxyl of ceramide. The chain is Ceramide phosphoethanolamine synthase from Drosophila melanogaster (Fruit fly).